We begin with the raw amino-acid sequence, 285 residues long: 2-dehydro-3-deoxyphosphooctonate aldolase (285 aa).

The protein belongs to the KdsA family.

The protein resides in the cytoplasm. It carries out the reaction D-arabinose 5-phosphate + phosphoenolpyruvate + H2O = 3-deoxy-alpha-D-manno-2-octulosonate-8-phosphate + phosphate. Its pathway is carbohydrate biosynthesis; 3-deoxy-D-manno-octulosonate biosynthesis; 3-deoxy-D-manno-octulosonate from D-ribulose 5-phosphate: step 2/3. The protein operates within bacterial outer membrane biogenesis; lipopolysaccharide biosynthesis. The chain is 2-dehydro-3-deoxyphosphooctonate aldolase from Acinetobacter baumannii (strain AB307-0294).